A 467-amino-acid polypeptide reads, in one-letter code: Asparagine--tRNA ligase (467 aa).

The protein belongs to the class-II aminoacyl-tRNA synthetase family. As to quaternary structure, homodimer.

The protein resides in the cytoplasm. It catalyses the reaction tRNA(Asn) + L-asparagine + ATP = L-asparaginyl-tRNA(Asn) + AMP + diphosphate + H(+). This is Asparagine--tRNA ligase from Haemophilus ducreyi (strain 35000HP / ATCC 700724).